Here is a 1273-residue protein sequence, read N- to C-terminus: DNA-directed RNA polymerase subunit beta (1273 aa).

This sequence belongs to the RNA polymerase beta chain family. As to quaternary structure, the RNAP catalytic core consists of 2 alpha, 1 beta, 1 beta' and 1 omega subunit. When a sigma factor is associated with the core the holoenzyme is formed, which can initiate transcription.

The catalysed reaction is RNA(n) + a ribonucleoside 5'-triphosphate = RNA(n+1) + diphosphate. Its function is as follows. DNA-dependent RNA polymerase catalyzes the transcription of DNA into RNA using the four ribonucleoside triphosphates as substrates. The sequence is that of DNA-directed RNA polymerase subunit beta from Phytoplasma mali (strain AT).